Consider the following 619-residue polypeptide: Phosphomethylpyrimidine synthase (619 aa).

Residues 93–104 (IKPEDNGLKGPD) are compositionally biased toward basic and acidic residues. The tract at residues 93–114 (IKPEDNGLKGPDRSGGVTPFPN) is disordered. Residues Asn217, Met246, Tyr275, His311, 331–333 (SRG), 372–375 (DGLR), and Glu411 contribute to the substrate site. Position 415 (His415) interacts with Zn(2+). Residue Tyr438 coordinates substrate. His479 provides a ligand contact to Zn(2+). Cys559, Cys562, and Cys567 together coordinate [4Fe-4S] cluster.

This sequence belongs to the ThiC family. Homodimer. It depends on [4Fe-4S] cluster as a cofactor.

It catalyses the reaction 5-amino-1-(5-phospho-beta-D-ribosyl)imidazole + S-adenosyl-L-methionine = 4-amino-2-methyl-5-(phosphooxymethyl)pyrimidine + CO + 5'-deoxyadenosine + formate + L-methionine + 3 H(+). Its pathway is cofactor biosynthesis; thiamine diphosphate biosynthesis. In terms of biological role, catalyzes the synthesis of the hydroxymethylpyrimidine phosphate (HMP-P) moiety of thiamine from aminoimidazole ribotide (AIR) in a radical S-adenosyl-L-methionine (SAM)-dependent reaction. This chain is Phosphomethylpyrimidine synthase, found in Rhizorhabdus wittichii (strain DSM 6014 / CCUG 31198 / JCM 15750 / NBRC 105917 / EY 4224 / RW1) (Sphingomonas wittichii).